The following is a 149-amino-acid chain: Alpha-crystallin A chain (149 aa).

The region spanning 41-149 (LFRSVLESGI…DPTHSERPIP (109 aa)) is the sHSP domain. Zn(2+) is bound by residues His89, Glu91, His96, and His143.

Belongs to the small heat shock protein (HSP20) family. As to quaternary structure, heteropolymer composed of three CRYAA and one CRYAB subunits. Inter-subunit bridging via zinc ions enhances stability, which is crucial as there is no protein turn over in the lens. Can also form homodimers and homotetramers (dimers of dimers) which serve as the building blocks of homooligomers. Within homooligomers, the zinc-binding motif is created from residues of 3 different molecules. His-89 and Glu-91 from one molecule are ligands of the zinc ion, and His-96 and His-143 residues from additional molecules complete the site with tetrahedral coordination geometry.

The protein resides in the cytoplasm. Its subcellular location is the nucleus. Contributes to the transparency and refractive index of the lens. May act as a chaperone, preventing aggregation of various proteins under a wide range of stress conditions. In Anas platyrhynchos (Mallard), this protein is Alpha-crystallin A chain (CRYAA).